We begin with the raw amino-acid sequence, 1100 residues long: Tyrosine-protein kinase JAK3 (1100 aa).

Positions 1 to 223 (MAPPSEETPL…RRTVVQALRR (223 aa)) are cytokine/interferon/growth hormone receptors. Phosphoserine is present on serine 17. The region spanning 24-353 (GALHVLLPPR…GYFRLICDSR (330 aa)) is the FERM domain. The region spanning 372–472 (LCHGPITLDF…GTALNLTSCC (101 aa)) is the SH2; atypical domain. A Protein kinase 1 domain is found at 517–777 (LEWHENLGHG…AILRDLNGLI (261 aa)). At tyrosine 781 the chain carries Phosphotyrosine; by autocatalysis. Residues 818–1091 (LKYISLLGKG…PAFDTLSPQL (274 aa)) form the Protein kinase 2 domain. ATP is bound by residues 824 to 832 (LGKGNFGSV) and lysine 851. Tyrosine 900 and tyrosine 935 each carry phosphotyrosine. Aspartate 945 (proton acceptor) is an active-site residue. Tyrosine 976 and tyrosine 977 each carry phosphotyrosine; by autocatalysis.

Belongs to the protein kinase superfamily. Tyr protein kinase family. JAK subfamily. Interacts with STAM2 and MYO18A. Interacts with SHB. Interacts with CD69. Post-translationally, autophosphorylated, leading to regulate its activity. IL2 promotes phosphorylation on tyrosine residues, including autophosphorylation on Tyr-781. Dephosphorylation of Tyr-976 and Tyr-977 by PTPN2 negatively regulates cytokine-mediated signaling. As to expression, in contrast with the ubiquitous expression of the other JAKs, JAK3 is predominantly expressed in hematopoietic tissues.

The protein localises to the endomembrane system. Its subcellular location is the cytoplasm. It carries out the reaction L-tyrosyl-[protein] + ATP = O-phospho-L-tyrosyl-[protein] + ADP + H(+). Its function is as follows. Non-receptor tyrosine kinase involved in various processes such as cell growth, development, or differentiation. Mediates essential signaling events in both innate and adaptive immunity and plays a crucial role in hematopoiesis during T-cells development. In the cytoplasm, plays a pivotal role in signal transduction via its association with type I receptors sharing the common subunit gamma such as IL2R, IL4R, IL7R, IL9R, IL15R and IL21R. Following ligand binding to cell surface receptors, phosphorylates specific tyrosine residues on the cytoplasmic tails of the receptor, creating docking sites for STATs proteins. Subsequently, phosphorylates the STATs proteins once they are recruited to the receptor. Phosphorylated STATs then form homodimer or heterodimers and translocate to the nucleus to activate gene transcription. For example, upon IL2R activation by IL2, JAK1 and JAK3 molecules bind to IL2R beta (IL2RB) and gamma chain (IL2RG) subunits inducing the tyrosine phosphorylation of both receptor subunits on their cytoplasmic domain. Then, STAT5A and STAT5B are recruited, phosphorylated and activated by JAK1 and JAK3. Once activated, dimerized STAT5 translocates to the nucleus and promotes the transcription of specific target genes in a cytokine-specific fashion. This Rattus norvegicus (Rat) protein is Tyrosine-protein kinase JAK3.